The primary structure comprises 412 residues: Divalent metal cation transporter MntH (412 aa).

The Cytoplasmic portion of the chain corresponds to 1-19 (MTNYRVESSSGRAARKMRL). A helical transmembrane segment spans residues 20–39 (ALMGPAFIAAIGYIDPGNFA). The Periplasmic segment spans residues 40–51 (TNIQAGASFGYQ). A helical membrane pass occupies residues 52–71 (LLWVVVWANLMAMLIQILSA). Topologically, residues 72–95 (KLGIATGKNLAEQIRDHYPRPFVW) are cytoplasmic. Residues 96-118 (FYWVQAEIIAMATDLAEFIGAAI) traverse the membrane as a helical segment. Over 119–125 (GFKLILG) the chain is Periplasmic. A helical transmembrane segment spans residues 126-145 (VSLLQGAVLTGIATFLILML). The Cytoplasmic segment spans residues 146–155 (QRRGQKPLEK). Residues 156-175 (VIGGLLLFVAAAYIVELIFS) form a helical membrane-spanning segment. Over 176–196 (QPNLAQLGKGMVIPSLPTSEA) the chain is Periplasmic. A helical transmembrane segment spans residues 197-220 (VFLAAGVLGATIMPHVIYLHSSLT). The Cytoplasmic portion of the chain corresponds to 221–238 (QHLHGGSRQQRYSATKWD). Residues 239 to 258 (VAIAMTIAGFVNLAMMATAA) traverse the membrane as a helical segment. The Periplasmic portion of the chain corresponds to 259–276 (AAFHFSGHTGVADLDEAY). A helical transmembrane segment spans residues 277–297 (LTLQPLLSHAAATVFGLSLVA). Topologically, residues 298 to 327 (AGLSSTVVGTLAGQVVMQGFIRFHIPLWVR) are cytoplasmic. A helical membrane pass occupies residues 328–344 (RTVTMLPSFIVILMGLD). At 345-350 (PTRILV) the chain is on the periplasmic side. Residues 351 to 370 (MSQVLLSFGIALALVPLLIF) traverse the membrane as a helical segment. At 371–387 (TSDSKLMGDLVNSKRVK) the chain is on the cytoplasmic side. Residues 388 to 406 (QTGWVIVVLVVALNIWLLV) form a helical membrane-spanning segment. Topologically, residues 407–412 (GTALGL) are periplasmic.

The protein belongs to the NRAMP family.

The protein resides in the cell inner membrane. In terms of biological role, h(+)-stimulated, divalent metal cation uptake system. The chain is Divalent metal cation transporter MntH from Escherichia coli O127:H6 (strain E2348/69 / EPEC).